The sequence spans 312 residues: MQKIPLIVIAGLTATGKTDVAIELAQLIDGEIVSADSMCVYKYMDIGTAKPTKEQRQIVKHYVIDVVFPNEDYNVALFQKDATKAIDEIYQKGKIPLLVGGTGFYIKSIVDDIEFPEMGDSKQVRQNLYKELEEKGNMYLYEMLKNVDSKAAQSVHPNNVKRVIRYLEIYFLTGKKPTDFLEKVRKKGSKKYNILPLCFVMERSLLKERIDARVEKMFKIGLVDEVKMLLEMGYSKDLKSMQGLGYKQVIPYIEGNITLEEAKEELKLRTKQFAKRQSIWFKYQGDFIYLDVGNLEFKEVVKKCFELCKSVV.

An ATP-binding site is contributed by 11–18 (GLTATGKT). Substrate is bound at residue 13–18 (TATGKT). The interval 36 to 39 (DSMC) is interaction with substrate tRNA.

It belongs to the IPP transferase family. In terms of assembly, monomer. Mg(2+) serves as cofactor.

The enzyme catalyses adenosine(37) in tRNA + dimethylallyl diphosphate = N(6)-dimethylallyladenosine(37) in tRNA + diphosphate. Functionally, catalyzes the transfer of a dimethylallyl group onto the adenine at position 37 in tRNAs that read codons beginning with uridine, leading to the formation of N6-(dimethylallyl)adenosine (i(6)A). The sequence is that of tRNA dimethylallyltransferase from Caldicellulosiruptor saccharolyticus (strain ATCC 43494 / DSM 8903 / Tp8T 6331).